A 270-amino-acid chain; its full sequence is Tetraspanin-14 (270 aa).

The Cytoplasmic portion of the chain corresponds to 1-17; sequence MHYYRYSNAEVSCWYKY. Residues 18 to 38 form a helical membrane-spanning segment; sequence LLFSYNIVFWLAGVVFLGVGL. The Extracellular portion of the chain corresponds to 39-61; it reads WAWSEKGVLSDLTKVTRLHGIDP. A helical transmembrane segment spans residues 62 to 82; it reads VVLVLMVGVVMFTLGFAGCVG. Topologically, residues 83-92 are cytoplasmic; that stretch reads ALRENICLLK. The chain crosses the membrane as a helical span at residues 93-113; that stretch reads FFCGAIVLIFFLELAVAVLAF. The Extracellular segment spans residues 114-232; the sequence is LFQDWVRDRF…QALEGWLPRN (119 aa). The interval 114 to 232 is necessary and sufficient for interaction with ADAM10; the sequence is LFQDWVRDRF…QALEGWLPRN (119 aa). Cystine bridges form between Cys-153–Cys-221, Cys-154–Cys-186, Cys-170–Cys-180, and Cys-187–Cys-200. Asn-169 carries an N-linked (GlcNAc...) asparagine glycan. A helical transmembrane segment spans residues 233 to 253; the sequence is IYIVAGVFIAISLLQIFGIFL. At 254-270 the chain is on the cytoplasmic side; it reads ARTLISDIEAVKAGHHF.

Belongs to the tetraspanin (TM4SF) family. Interacts with ADAM10; the interaction promotes ADAM10 maturation and cell surface expression.

Its subcellular location is the cell membrane. Functionally, part of TspanC8 subgroup, composed of 6 members that interact with the transmembrane metalloprotease ADAM10. This interaction is required for ADAM10 exit from the endoplasmic reticulum and for enzymatic maturation and trafficking to the cell surface as well as substrate specificity. Different TspanC8/ADAM10 complexes have distinct substrates. Negatively regulates ADAM10-mediated cleavage of GP6. Promotes ADAM10-mediated cleavage of CDH5. This is Tetraspanin-14 (Tspan14) from Mus musculus (Mouse).